A 183-amino-acid polypeptide reads, in one-letter code: Inner membrane protein p54 (183 aa).

A helical membrane pass occupies residues 32–52 (YTILIAIVVLVIIIIVLIYLF). The interval 81–157 (EVTPQPGTSK…PYTTVTTQNT (77 aa)) is disordered. Polar residues predominate over residues 111–122 (RPATNKPVTDNP). A compositionally biased stretch (low complexity) spans 130 to 143 (ATGGPAAAPAAASA). Residues 149–161 (YTTVTTQNTASQT) are interaction with host DYNLL1.

It belongs to the asfivirus envelope protein p54 family. Interacts with the host light chain cytoplasmic dynein DYNLL1; this interaction is critical for intracellular microtubule-dependent virus transport toward viral factories.

The protein localises to the virion membrane. The protein resides in the host cytoplasm. Its subcellular location is the host cytoskeleton. It is found in the host endoplasmic reticulum membrane. Functionally, inner envelope protein involved, through its interaction with host dynein, in the intracellular microtubule-dependent transport of viral capsid toward viral factories. Seems to induce caspase-3 activation and apoptosis. Plays a role in virion morphogenesis by recruiting and transforming the host ER membranes into the precursors of the viral envelope. Involved in virus attachment to the host cell. In Ornithodoros (relapsing fever ticks), this protein is Inner membrane protein p54.